The following is a 464-amino-acid chain: tRNA-2-methylthio-N(6)-dimethylallyladenosine synthase (464 aa).

The MTTase N-terminal domain maps to 19–135; that stretch reads GSYWITTFGC…LENLLERVDL (117 aa). The [4Fe-4S] cluster site is built by Cys-28, Cys-64, Cys-98, Cys-170, Cys-174, and Cys-177. The 238-residue stretch at 156–393 folds into the Radical SAM core domain; the sequence is RDSSICGWVN…NELVETTSRK (238 aa). One can recognise a TRAM domain in the interval 396–464; it reads QRYLNNIESV…SFSLSGQIYK (69 aa).

It belongs to the methylthiotransferase family. MiaB subfamily. As to quaternary structure, monomer. Requires [4Fe-4S] cluster as cofactor.

It localises to the cytoplasm. The catalysed reaction is N(6)-dimethylallyladenosine(37) in tRNA + (sulfur carrier)-SH + AH2 + 2 S-adenosyl-L-methionine = 2-methylsulfanyl-N(6)-dimethylallyladenosine(37) in tRNA + (sulfur carrier)-H + 5'-deoxyadenosine + L-methionine + A + S-adenosyl-L-homocysteine + 2 H(+). Catalyzes the methylthiolation of N6-(dimethylallyl)adenosine (i(6)A), leading to the formation of 2-methylthio-N6-(dimethylallyl)adenosine (ms(2)i(6)A) at position 37 in tRNAs that read codons beginning with uridine. The protein is tRNA-2-methylthio-N(6)-dimethylallyladenosine synthase of Prochlorococcus marinus subsp. pastoris (strain CCMP1986 / NIES-2087 / MED4).